The chain runs to 222 residues: 6,7-dimethyl-8-ribityllumazine synthase, chloroplastic (222 aa).

A chloroplast-targeting transit peptide spans M1–A66. Residues F89, A122 to E124, and A146 to V148 contribute to the 5-amino-6-(D-ribitylamino)uracil site. D151–T152 serves as a coordination point for (2S)-2-hydroxy-3-oxobutyl phosphate. H154 serves as the catalytic Proton donor. 5-amino-6-(D-ribitylamino)uracil is bound at residue F179. R193 contacts (2S)-2-hydroxy-3-oxobutyl phosphate.

It belongs to the DMRL synthase family. Oligomer forming an icosahedral capsid.

Its subcellular location is the plastid. It is found in the chloroplast. It carries out the reaction (2S)-2-hydroxy-3-oxobutyl phosphate + 5-amino-6-(D-ribitylamino)uracil = 6,7-dimethyl-8-(1-D-ribityl)lumazine + phosphate + 2 H2O + H(+). It participates in cofactor biosynthesis; riboflavin biosynthesis; riboflavin from 2-hydroxy-3-oxobutyl phosphate and 5-amino-6-(D-ribitylamino)uracil: step 1/2. Its function is as follows. Catalyzes the formation of 6,7-dimethyl-8-ribityllumazine by condensation of 5-amino-6-(D-ribitylamino)uracil with 3,4-dihydroxy-2-butanone 4-phosphate. This is the penultimate step in the biosynthesis of riboflavin. This Spinacia oleracea (Spinach) protein is 6,7-dimethyl-8-ribityllumazine synthase, chloroplastic.